A 149-amino-acid polypeptide reads, in one-letter code: Cytochrome c oxidase subunit 5A, mitochondrial (149 aa).

Belongs to the cytochrome c oxidase subunit 5A family. Component of the cytochrome c oxidase (complex IV, CIV), a multisubunit enzyme composed of a catalytic core of 3 subunits and several supernumerary subunits. The complex exists as a monomer or a dimer and forms supercomplexes (SCs) in the inner mitochondrial membrane with ubiquinol-cytochrome c oxidoreductase (cytochrome b-c1 complex, complex III, CIII).

It localises to the mitochondrion inner membrane. It participates in energy metabolism; oxidative phosphorylation. Functionally, component of the cytochrome c oxidase, the last enzyme in the mitochondrial electron transport chain which drives oxidative phosphorylation. The respiratory chain contains 3 multisubunit complexes succinate dehydrogenase (complex II, CII), ubiquinol-cytochrome c oxidoreductase (cytochrome b-c1 complex, complex III, CIII) and cytochrome c oxidase (complex IV, CIV), that cooperate to transfer electrons derived from NADH and succinate to molecular oxygen, creating an electrochemical gradient over the inner membrane that drives transmembrane transport and the ATP synthase. Cytochrome c oxidase is the component of the respiratory chain that catalyzes the reduction of oxygen to water. Electrons originating from reduced cytochrome c in the intermembrane space (IMS) are transferred via the dinuclear copper A center (CU(A)) of subunit 2 and heme A of subunit 1 to the active site in subunit 1, a binuclear center (BNC) formed by heme A3 and copper B (CU(B)). The BNC reduces molecular oxygen to 2 water molecules using 4 electrons from cytochrome c in the IMS and 4 protons from the mitochondrial matrix. The polypeptide is Cytochrome c oxidase subunit 5A, mitochondrial (Drosophila melanogaster (Fruit fly)).